The following is a 285-amino-acid chain: 4-diphosphocytidyl-2-C-methyl-D-erythritol kinase (285 aa).

Lys11 is a catalytic residue. 95–105 (PVAAGIGGGSA) contributes to the ATP binding site. Asp137 is a catalytic residue.

This sequence belongs to the GHMP kinase family. IspE subfamily.

The enzyme catalyses 4-CDP-2-C-methyl-D-erythritol + ATP = 4-CDP-2-C-methyl-D-erythritol 2-phosphate + ADP + H(+). Its pathway is isoprenoid biosynthesis; isopentenyl diphosphate biosynthesis via DXP pathway; isopentenyl diphosphate from 1-deoxy-D-xylulose 5-phosphate: step 3/6. In terms of biological role, catalyzes the phosphorylation of the position 2 hydroxy group of 4-diphosphocytidyl-2C-methyl-D-erythritol. This chain is 4-diphosphocytidyl-2-C-methyl-D-erythritol kinase, found in Paramagnetospirillum magneticum (strain ATCC 700264 / AMB-1) (Magnetospirillum magneticum).